A 357-amino-acid chain; its full sequence is Gas vesicle ATPase GvpN (357 aa).

A compositionally biased stretch (polar residues) spans 22-36 (ATSASKNGGRTTPSA). A disordered region spans residues 22–43 (ATSASKNGGRTTPSALTPRPRS). Position 72–79 (72–79 (GPAGTGKT)) interacts with ATP.

It belongs to the CbbQ/NirQ/NorQ/GpvN family. In terms of assembly, forms homodimers, probably interacts with other GV proteins including GvpA.

The protein localises to the gas vesicle. It localises to the cytoplasm. The enzyme catalyses ATP + H2O = ADP + phosphate + H(+). Its function is as follows. An ATPase that functions in gas vesicle formation. A minor component of the gas vesicle, also found in soluble extracts. Gas vesicles (GV) are hollow, gas filled proteinaceous nanostructures. During planktonic growth they allow positioning of the organism at a favorable depth for light or nutrient acquisition. In Ancylobacter aquaticus, this protein is Gas vesicle ATPase GvpN.